The following is a 160-amino-acid chain: Cyclic pyranopterin monophosphate synthase (160 aa).

Substrate is bound by residues 74–76 (LSH) and 112–113 (ME). Asp-127 is a catalytic residue.

Belongs to the MoaC family. As to quaternary structure, homohexamer; trimer of dimers.

It catalyses the reaction (8S)-3',8-cyclo-7,8-dihydroguanosine 5'-triphosphate = cyclic pyranopterin phosphate + diphosphate. Its pathway is cofactor biosynthesis; molybdopterin biosynthesis. Functionally, catalyzes the conversion of (8S)-3',8-cyclo-7,8-dihydroguanosine 5'-triphosphate to cyclic pyranopterin monophosphate (cPMP). In Trichlorobacter lovleyi (strain ATCC BAA-1151 / DSM 17278 / SZ) (Geobacter lovleyi), this protein is Cyclic pyranopterin monophosphate synthase.